The chain runs to 203 residues: ATP-dependent Clp protease proteolytic subunit (203 aa).

Catalysis depends on serine 107, which acts as the Nucleophile. The active site involves histidine 132.

It belongs to the peptidase S14 family. As to quaternary structure, fourteen ClpP subunits assemble into 2 heptameric rings which stack back to back to give a disk-like structure with a central cavity, resembling the structure of eukaryotic proteasomes.

The protein localises to the cytoplasm. The enzyme catalyses Hydrolysis of proteins to small peptides in the presence of ATP and magnesium. alpha-casein is the usual test substrate. In the absence of ATP, only oligopeptides shorter than five residues are hydrolyzed (such as succinyl-Leu-Tyr-|-NHMec, and Leu-Tyr-Leu-|-Tyr-Trp, in which cleavage of the -Tyr-|-Leu- and -Tyr-|-Trp bonds also occurs).. Cleaves peptides in various proteins in a process that requires ATP hydrolysis. Has a chymotrypsin-like activity. Plays a major role in the degradation of misfolded proteins. This Pelagibacter ubique (strain HTCC1062) protein is ATP-dependent Clp protease proteolytic subunit.